The chain runs to 269 residues: Protein tio (269 aa).

Basic and acidic residues predominate over residues 1-12 (MANEPQEHEEGK). Residues 1–127 (MANEPQEHEE…NETKCPDEQN (127 aa)) are disordered. Residues 1–246 (MANEPQEHEE…VEKKLTCVIC (246 aa)) lie on the Cytoplasmic side of the membrane. The span at 27-41 (PNIPQDPTPGTPPGP) shows a compositional bias: pro residues. The segment covering 61–74 (SEGPPDGSGNSSPP) has biased composition (low complexity). Polar residues-rich tracts occupy residues 91-101 (SESGGNNSAPN) and 114-127 (AGNG…DEQN). Tyr-136 carries the post-translational modification Phosphotyrosine; by host LCK. A CSKH/LBD2 region spans residues 158–167 (EEERSPFNKY). The tract at residues 186-195 (IPPPQLPPRP) is SH3B/LBD1. The chain crosses the membrane as a helical span at residues 247 to 267 (LLIGILVLLILLFMLGFLFLL). The Extracellular segment spans residues 268–269 (MK).

As to quaternary structure, homodimer. Binds SH3 domain of host LYN, HCK, LCK, SRC, FYN or YES. When tyrosine-phosphorylated, binds to the SH2 domain of host LCK, SRC, or FYN. Phosphorylated by host LCK, SRC and less efficiently by FYN.

It is found in the host cell membrane. Functionally, transforms host T-cells, inducing T-cell lymphomia in the host. Activates at least SRC and LCK tyrosines kinases, thereby activating signaling pathway transforming host T-cells. Human T-cells transformed ex vivo display a IL2 indenpendent growth phenotype. This chain is Protein tio, found in Ateles (AtHV-3).